A 380-amino-acid polypeptide reads, in one-letter code: Alpha-N-acetylneuraminate alpha-2,8-sialyltransferase ST8SIA3 (380 aa).

The Cytoplasmic segment spans residues 1 to 9; sequence MRNCKMARV. A helical; Signal-anchor for type II membrane protein membrane pass occupies residues 10 to 33; the sequence is ASVLGLVMLSVALLNLSLISYVSL. The Lumenal portion of the chain corresponds to 34-380; the sequence is KKENIFATPK…LTKLTLSHCA (347 aa). 2 N-linked (GlcNAc...) asparagine glycosylation sites follow: Asn-93 and Asn-113. Intrachain disulfides connect Cys-162-Cys-313 and Cys-176-Cys-379. 2 residues coordinate CMP-N-acetyl-beta-neuraminate: Asn-167 and Asn-190. Asn-206 is a glycosylation site (N-linked (GlcNAc...) asparagine). Positions 300, 301, 302, 322, 336, and 337 each coordinate CMP-N-acetyl-beta-neuraminate. His-354 functions as the Proton donor/acceptor in the catalytic mechanism.

Belongs to the glycosyltransferase 29 family. Homodimer. Post-translationally, autopolysialylated.

The protein localises to the golgi apparatus membrane. It carries out the reaction [N-acetyl-alpha-D-neuraminosyl-(2-&gt;8)](n) + CMP-N-acetyl-beta-neuraminate = [N-acetyl-alpha-D-neuraminosyl-(2-&gt;8)](n+1) + CMP + H(+). The catalysed reaction is alpha-Neu5Ac-(2-&gt;3)-beta-D-Gal-(1-&gt;4)-6S-D-GlcNAc + CMP-N-acetyl-beta-neuraminate = alpha-Neu5Ac-(2-&gt;8)-alpha-Neu5Ac-(2-&gt;3)-beta-D-Gal-(1-&gt;4)-6S-D-GlcNAc + CMP + H(+). It catalyses the reaction a ganglioside GM3 (d18:1(4E)) + CMP-N-acetyl-beta-neuraminate = a ganglioside GD3 (d18:1(4E)) + CMP + H(+). The enzyme catalyses a ganglioside GM3 + CMP-N-acetyl-beta-neuraminate = a ganglioside GD3 + CMP + H(+). It carries out the reaction an N-acetyl-alpha-neuraminyl-(2-&gt;3)-beta-D-galactosyl derivative + CMP-N-acetyl-beta-neuraminate = an N-acetyl-alpha-neuraminyl-(2-&gt;8)-N-acetyl-alpha-neuraminyl-(2-&gt;3)-beta-D-galactosyl derivative + CMP + H(+). The catalysed reaction is an N-acetyl-alpha-neuraminyl-(2-&gt;3)-beta-D-galactosyl-(1-&gt;4)-N-acetyl-beta-D-glucosaminyl derivative + CMP-N-acetyl-beta-neuraminate = an alpha-Neu5Ac-(2-&gt;8)-alpha-Neu5Ac-(2-&gt;3)-beta-D-Gal-(1-&gt;4)-beta-D-GlcNAc derivative + CMP + H(+). It functions in the pathway protein modification; protein glycosylation. Its function is as follows. Catalyzes the transfer of sialic acid from a CMP-linked sialic acid donor onto a terminal alpha-2,3-, alpha-2,6-, or alpha-2,8-linked sialic acid of an acceptor, such as N-linked oligosaccharides of glycoproteins and glycolipids through alpha-2,8-linkages. Forms oligosialic and polysialic acid on various sialylated N-acetyllactosamine oligosaccharides of glycoproteins, including FETUB N-glycans, a2-HS-glycoprotein (AHSG) and alpha 2,3-sialylated glycosphingolipids, such as alpha 2,3-sialylparagloboside and ganglioside GM3 and to a lesser extent NCAM1 N-glycans. However, it is much more specific to N-linked oligosaccharides of glycoproteins than glycosphingolipids. 2,3-sialylparagloboside serves as the best acceptor substrate among the glycolipids. alpha-Neu5Ac-(2-&gt;8)-alpha-Neu5Ac-(2-&gt;3)-beta-D-Gal-(1-&gt;4)-6S-D-GlcNAc and monosialyl and disialyl N-acetyllactosamines are the best acceptor substrates among glycoproteins. May plays critical role in the striatum by mediating the formation of disialylated and trisialylated terminal glycotopes on N- and O-glycans of specific striatal proteins, regulating their distribution in lipid rafts, affecting their interaction with other binding partners, and subsequently modulating striatal functions. The protein is Alpha-N-acetylneuraminate alpha-2,8-sialyltransferase ST8SIA3 of Pan troglodytes (Chimpanzee).